A 277-amino-acid chain; its full sequence is Bis(5'-nucleosyl)-tetraphosphatase, symmetrical (277 aa).

Belongs to the Ap4A hydrolase family.

It carries out the reaction P(1),P(4)-bis(5'-adenosyl) tetraphosphate + H2O = 2 ADP + 2 H(+). Functionally, hydrolyzes diadenosine 5',5'''-P1,P4-tetraphosphate to yield ADP. The chain is Bis(5'-nucleosyl)-tetraphosphatase, symmetrical from Azotobacter vinelandii (strain DJ / ATCC BAA-1303).